A 188-amino-acid polypeptide reads, in one-letter code: Ribosome maturation factor RimM (188 aa).

A PRC barrel domain is found at 96–169; sequence DDEFYYADLE…TLLIDPLAAG (74 aa).

This sequence belongs to the RimM family. In terms of assembly, binds ribosomal protein uS19.

It is found in the cytoplasm. In terms of biological role, an accessory protein needed during the final step in the assembly of 30S ribosomal subunit, possibly for assembly of the head region. Essential for efficient processing of 16S rRNA. May be needed both before and after RbfA during the maturation of 16S rRNA. It has affinity for free ribosomal 30S subunits but not for 70S ribosomes. The chain is Ribosome maturation factor RimM from Rhizobium etli (strain ATCC 51251 / DSM 11541 / JCM 21823 / NBRC 15573 / CFN 42).